Reading from the N-terminus, the 570-residue chain is Urease subunit alpha (570 aa).

A Urease domain is found at 131–570 (GGMDSHIHFI…LPMAQRYFLF (440 aa)). Residues His136, His138, and Lys219 each coordinate Ni(2+). Lys219 carries the N6-carboxylysine modification. Residue His221 participates in substrate binding. Ni(2+)-binding residues include His248 and His274. Catalysis depends on His322, which acts as the Proton donor. Asp362 contacts Ni(2+).

Belongs to the metallo-dependent hydrolases superfamily. Urease alpha subunit family. In terms of assembly, heterotrimer of UreA (gamma), UreB (beta) and UreC (alpha) subunits. Three heterotrimers associate to form the active enzyme. It depends on Ni cation as a cofactor. In terms of processing, carboxylation allows a single lysine to coordinate two nickel ions.

It is found in the cytoplasm. It catalyses the reaction urea + 2 H2O + H(+) = hydrogencarbonate + 2 NH4(+). Its pathway is nitrogen metabolism; urea degradation; CO(2) and NH(3) from urea (urease route): step 1/1. The sequence is that of Urease subunit alpha from Rhizobium meliloti (strain 1021) (Ensifer meliloti).